The chain runs to 391 residues: Choline/ethanolaminephosphotransferase 1 (391 aa).

Residues 1-49 (MGYFVPDSHIENLKSYKYQSEDRSLVSKYFLKPFWQRFCHIFPTWMAPN) are Lumenal-facing. Residues 50–69 (IITLSGFAFIVINVLTVFYY) form a helical membrane-spanning segment. Topologically, residues 70–172 (DPNLNTDTPR…YHTHTLYLSE (103 aa)) are cytoplasmic. The helical transmembrane segment at 173 to 193 (FSGPVEGILIVCVSLILTGIY) threads the bilayer. The Lumenal segment spans residues 194–211 (GKQVIWHTYLFTITVGDK). A helical transmembrane segment spans residues 212–232 (VIDVDTLDIVFSLAVFGLVMN). Topologically, residues 233-264 (ALSAKRNVDKYYRNSTSSANNITQIEQDSAIK) are cytoplasmic. Residues 265–282 (GLLPFFAYYASIALLVWM) traverse the membrane as a helical segment. At 283 to 285 (QPS) the chain is on the lumenal side. The helical transmembrane segment at 286-308 (FITLSFILSVGFTGAFTVGRIIV) threads the bilayer. Residues 309–321 (CHLTKQSFPMFNA) lie on the Cytoplasmic side of the membrane. Residues 322-342 (PMLIPLCQIVLYKICLSLWGI) form a helical membrane-spanning segment. Over 343 to 346 (ESNK) the chain is Lumenal. The helical transmembrane segment at 347–367 (IVFALSWLGFGLSLGVHIMFM) threads the bilayer. The Cytoplasmic segment spans residues 368 to 391 (NDIIHEFTEYLDVYALSIKRSKLT).

Belongs to the CDP-alcohol phosphatidyltransferase class-I family. Mg(2+) serves as cofactor.

It is found in the golgi apparatus membrane. The enzyme catalyses CDP-ethanolamine + a 1,2-diacyl-sn-glycerol = a 1,2-diacyl-sn-glycero-3-phosphoethanolamine + CMP + H(+). It carries out the reaction CDP-choline + a 1,2-diacyl-sn-glycerol = a 1,2-diacyl-sn-glycero-3-phosphocholine + CMP + H(+). It catalyses the reaction CDP-N-methylethanolamine + a 1,2-diacyl-sn-glycerol = a 1,2-diacyl-sn-glycero-3-phospho-N-methylethanolamine + CMP + H(+). The catalysed reaction is CDP-N,N-dimethylethanolamine + a 1,2-diacyl-sn-glycerol = a 1,2-diacyl-sn-glycero-3-phospho-N,N-dimethylethanolamine + CMP + H(+). The enzyme catalyses 1,2-di-(9Z-octadecenoyl)-glycerol + CDP-choline = 1,2-di-(9Z-octadecenoyl)-sn-glycero-3-phosphocholine + CMP + H(+). It carries out the reaction 1,2-di-(9Z-octadecenoyl)-glycerol + CDP-ethanolamine = 1,2-di-(9Z-octadecenoyl)-sn-glycero-3-phosphoethanolamine + CMP + H(+). It functions in the pathway phospholipid metabolism; phosphatidylethanolamine biosynthesis; phosphatidylethanolamine from ethanolamine: step 3/3. Its pathway is phospholipid metabolism; phosphatidylcholine biosynthesis; phosphatidylcholine from phosphocholine: step 2/2. Requires a divalent cation activator, and is inhibited by CMP. Activated by phospholipids, especially phosphatidylcholine. Functionally, catalyzes the final step in the CDP-ethanolamine route leading to phosphatidylethanolamine (PE). Can also catalyze the formation of phosphatidylcholine (PC) from CDP-choline, but does not substantially contribute to PC biosynthesis. Preferentially uses CDP-dimethylethanolamine and CDP-propanolamine as aminoalcohol substrates. Shows highest activity toward di-unsaturated diacylglycerol species as lipid substrates. The CDP-ethanolamine pathway may play a role in maintaining the proper PE species distribution. In Saccharomyces cerevisiae (strain ATCC 204508 / S288c) (Baker's yeast), this protein is Choline/ethanolaminephosphotransferase 1 (EPT1).